The primary structure comprises 192 residues: Ion-translocating oxidoreductase complex subunit B (192 aa).

Residues 1 to 26 are hydrophobic; it reads MNAIWIAVAAVSLLGLAFGAILGYAS. In terms of domain architecture, 4Fe-4S spans 32–91; it reads EDDPVVEKIDEILPQSQCGQCGYPGCRPYAEAISCNGEKINRCAPGGEAVMLKIAELLNV. [4Fe-4S] cluster is bound by residues cysteine 49, cysteine 52, cysteine 57, cysteine 74, cysteine 117, cysteine 120, cysteine 123, cysteine 127, cysteine 147, cysteine 150, cysteine 153, and cysteine 157. 2 consecutive 4Fe-4S ferredoxin-type domains span residues 108–137 and 138–167; these read MVAFIDENNCIGCTKCIQACPVDAIVGATR and AMHTVMSDLCTGCNLCVDPCPTHCISLQPV.

This sequence belongs to the 4Fe4S bacterial-type ferredoxin family. RnfB subfamily. The complex is composed of six subunits: RsxA, RsxB, RsxC, RsxD, RsxE and RsxG. [4Fe-4S] cluster serves as cofactor.

The protein resides in the cell inner membrane. Functionally, part of a membrane-bound complex that couples electron transfer with translocation of ions across the membrane. Required to maintain the reduced state of SoxR. The protein is Ion-translocating oxidoreductase complex subunit B of Escherichia coli O17:K52:H18 (strain UMN026 / ExPEC).